We begin with the raw amino-acid sequence, 438 residues long: Adenylosuccinate synthetase (438 aa).

GTP is bound by residues 13 to 19 and 41 to 43; these read GDEGKGK and GHT. The active-site Proton acceptor is the Asp-14. Mg(2+) contacts are provided by Asp-14 and Gly-41. IMP is bound by residues 14–17, 39–42, Thr-130, Arg-144, Gln-225, Thr-240, and Arg-310; these read DEGK and NAGH. Catalysis depends on His-42, which acts as the Proton donor. Residue 306–312 participates in substrate binding; sequence ATTGRLR. GTP is bound by residues Arg-312, 338–340, and 421–423; these read KLD and STG.

Belongs to the adenylosuccinate synthetase family. In terms of assembly, homodimer. The cofactor is Mg(2+).

The protein localises to the cytoplasm. It carries out the reaction IMP + L-aspartate + GTP = N(6)-(1,2-dicarboxyethyl)-AMP + GDP + phosphate + 2 H(+). It functions in the pathway purine metabolism; AMP biosynthesis via de novo pathway; AMP from IMP: step 1/2. Its function is as follows. Plays an important role in the de novo pathway of purine nucleotide biosynthesis. Catalyzes the first committed step in the biosynthesis of AMP from IMP. The sequence is that of Adenylosuccinate synthetase from Aliivibrio fischeri (strain ATCC 700601 / ES114) (Vibrio fischeri).